The primary structure comprises 430 residues: Enolase (430 aa).

Gln-163 contributes to the (2R)-2-phosphoglycerate binding site. The active-site Proton donor is Glu-205. Residues Asp-242, Glu-287, and Asp-314 each contribute to the Mg(2+) site. (2R)-2-phosphoglycerate-binding residues include Lys-339, Arg-368, Ser-369, and Lys-390. Lys-339 serves as the catalytic Proton acceptor.

Belongs to the enolase family. Mg(2+) serves as cofactor.

The protein localises to the cytoplasm. The protein resides in the secreted. Its subcellular location is the cell surface. The enzyme catalyses (2R)-2-phosphoglycerate = phosphoenolpyruvate + H2O. The protein operates within carbohydrate degradation; glycolysis; pyruvate from D-glyceraldehyde 3-phosphate: step 4/5. Functionally, catalyzes the reversible conversion of 2-phosphoglycerate (2-PG) into phosphoenolpyruvate (PEP). It is essential for the degradation of carbohydrates via glycolysis. The polypeptide is Enolase (Bacillus pumilus (strain SAFR-032)).